We begin with the raw amino-acid sequence, 348 residues long: Phospho-2-dehydro-3-deoxyheptonate aldolase, Trp-sensitive (348 aa).

This sequence belongs to the class-I DAHP synthase family.

It carries out the reaction D-erythrose 4-phosphate + phosphoenolpyruvate + H2O = 7-phospho-2-dehydro-3-deoxy-D-arabino-heptonate + phosphate. Its pathway is metabolic intermediate biosynthesis; chorismate biosynthesis; chorismate from D-erythrose 4-phosphate and phosphoenolpyruvate: step 1/7. Its function is as follows. Stereospecific condensation of phosphoenolpyruvate (PEP) and D-erythrose-4-phosphate (E4P) giving rise to 3-deoxy-D-arabino-heptulosonate-7-phosphate (DAHP). This is Phospho-2-dehydro-3-deoxyheptonate aldolase, Trp-sensitive (aroH) from Escherichia coli O6:H1 (strain CFT073 / ATCC 700928 / UPEC).